We begin with the raw amino-acid sequence, 285 residues long: Protein FD (285 aa).

The segment covering 1–12 (MLSSAKHQRNHR) has biased composition (basic residues). Disordered stretches follow at residues 1 to 59 (MLSS…QKRS), 79 to 107 (NRHS…NSIF), 115 to 134 (LNQE…NGDS), 198 to 236 (SSSF…ARKQ), and 257 to 285 (KRQQ…TAPF). Polar residues predominate over residues 13–25 (LSATNKNQTLTKV). The segment covering 26–50 (SSISSSSPSSSSSSSSTSSSSPLPS) has biased composition (low complexity). Over residues 98 to 107 (HHNQNPNSIF) the composition is skewed to polar residues. Positions 214–277 (GNRRHKRMIK…AIQQPKKNTL (64 aa)) constitute a bZIP domain. A basic motif region spans residues 216-235 (RRHKRMIKNRESAARSRARK). The leucine-zipper stretch occupies residues 242–263 (LELEVAHLQAENARLKRQQDQL). Over residues 272-285 (PKKNTLQRSSTAPF) the composition is skewed to polar residues. At Thr282 the chain carries Phosphothreonine.

This sequence belongs to the bZIP family. As to quaternary structure, self-interacts. Interacts with FT and FDP/BZIP27. Interacts with GRF3 and GRF4, and in a calcium-independent manner, with CPK6 and CPK33. Phosphorylated at Thr-282 in a calcium-dependent manner by CPK6 and CPK33. As to expression, highly expressed in shoot apex.

The protein resides in the nucleus. Its function is as follows. Transcription factor required for the transition to flowering promoted by FT. This is Protein FD from Arabidopsis thaliana (Mouse-ear cress).